The chain runs to 285 residues: uncharacterized protein (285 aa).

Residues 6 to 26 form a helical membrane-spanning segment; the sequence is IKYFSTIIVAVVAVLAGWWLW.

The protein belongs to the membrane fusion protein (MFP) (TC 8.A.1) family.

The protein resides in the membrane. This is an uncharacterized protein from Escherichia coli (strain K12).